A 551-amino-acid chain; its full sequence is MPIGNLGNNVNSNNLIPPAPPLPSQTDGASRGGAGQLINSTGALGSRLLFSPLRNSIADSVDSRDIPGLPVHPSRLATATSEICLLGGFEVLHDKGPLDTLNKQIGASAFRIEQQSDGSYAAIGEKNGVEVSVILNSQELQSLQAIDIEDKGRFVFTGGRGGGGHSMVTPASDIAEARAKILAKLDPNNHGGSQARNVDTRSVGVGSASGMDDSVVSETRTSSTASSVRSDPKFWVSIGAIAAGLAGLAATGITQALALTPEPDDPTTTDPEQAASAAESATRDQLTQEAFKNPENQKVSIDEIGNSIPSGELKDDVVAKIEEQAKEAGEAARQQAVESNAQAQQRYDTQYARRQEELELSSGIGYSLSSALIVGGGIGAGVTTALHRRNQPAEQTTTTTTHTVVQQQTGGNTPAQGGTDAIRAEDTSLNRRDSQRSTASTHWSDTSSAVVNPYAEVGEARNSSPARQAEEHIYDEVAADPNYSVIQNFSGNNQVTGRLMGTPGQGIQSTYAILTNNSAGLRLGMGGLTGSGGSAVNTANAAPTPGPGRFV.

Composition is skewed to low complexity over residues 1 to 15 and 212 to 229; these read MPIG…SNNL and DDSV…SSVR. 2 disordered regions span residues 1–36 and 186–229; these read MPIG…GAGQ and DPNN…SSVR. Over 1–233 the chain is Cytoplasmic; that stretch reads MPIGNLGNNV…TASSVRSDPK (233 aa). A helical transmembrane segment spans residues 234-254; sequence FWVSIGAIAAGLAGLAATGIT. The Extracellular portion of the chain corresponds to 255-362; sequence QALALTPEPD…RRQEELELSS (108 aa). Residues 259-311 form a disordered region; the sequence is LTPEPDDPTTTDPEQAASAAESATRDQLTQEAFKNPENQKVSIDEIGNSIPSG. The segment covering 283-299 has biased composition (polar residues); that stretch reads RDQLTQEAFKNPENQKV. The chain crosses the membrane as a helical span at residues 363 to 383; it reads GIGYSLSSALIVGGGIGAGVT. At 384 to 551 the chain is on the cytoplasmic side; it reads TALHRRNQPA…APTPGPGRFV (168 aa). Residues 389-450 are disordered; sequence RNQPAEQTTT…THWSDTSSAV (62 aa). Low complexity predominate over residues 395–409; that stretch reads QTTTTTTHTVVQQQT. Positions 422–435 are enriched in basic and acidic residues; sequence IRAEDTSLNRRDSQ. Positions 436–450 are enriched in polar residues; the sequence is RSTASTHWSDTSSAV. An Essential for actin pedestal formation motif is present at residues 452-454; it reads NPY.

This sequence belongs to the Tir receptor family. In terms of assembly, interacts with intimin and host proteins. Phosphorylated by host kinases.

The protein localises to the secreted. The protein resides in the host cell membrane. In terms of biological role, multifunctional protein that is required for efficient pedestal formation in host epithelial cells during infection. The extracellular region acts as a receptor for bacterial intimin, allowing the bacterium to attach tightly to the host-cell surface. Simultaneously, the intracellular region initiates a signaling cascade in the host cell, which leads to actin polymerization and formation of actin pedestals at the sites of bacterial adhesion. This is Translocated intimin receptor Tir (tir) from Escherichia coli O111:H- (strain 11128 / EHEC).